We begin with the raw amino-acid sequence, 210 residues long: Thymidylate kinase (210 aa).

Residue Gly11–Thr18 coordinates ATP.

Belongs to the thymidylate kinase family.

It carries out the reaction dTMP + ATP = dTDP + ADP. Its function is as follows. Phosphorylation of dTMP to form dTDP in both de novo and salvage pathways of dTTP synthesis. The sequence is that of Thymidylate kinase (tmk) from Mycoplasma genitalium (strain ATCC 33530 / DSM 19775 / NCTC 10195 / G37) (Mycoplasmoides genitalium).